The following is a 95-amino-acid chain: UPF0213 protein YPA_2977 (95 aa).

The 76-residue stretch at 4-79 (SLWHLYLLRT…KQLSKQQKEK (76 aa)) folds into the GIY-YIG domain.

It belongs to the UPF0213 family.

This is UPF0213 protein YPA_2977 from Yersinia pestis bv. Antiqua (strain Antiqua).